The chain runs to 157 residues: MFDVLMYLFETYIHNEAEMRVDQDRLTRDLTDAGFEREDIYNALLWLEKLADYQEGLVEPMQLASDPLSVRIYTAEECERLDASCRGFVLFLEQIQVLNLETREMVIERVMALDTAEFELEDLKWVILMVLFNIPGCENAYQQMEELLFEVNEGMLH.

This sequence belongs to the Smg family.

In Enterobacter sp. (strain 638), this protein is Protein Smg.